A 158-amino-acid polypeptide reads, in one-letter code: Large ribosomal subunit protein uL11 (158 aa).

The protein belongs to the universal ribosomal protein uL11 family. As to quaternary structure, part of the ribosomal stalk of the 50S ribosomal subunit. Interacts with L10 and the large rRNA to form the base of the stalk. L10 forms an elongated spine to which L12 dimers bind in a sequential fashion forming a multimeric L10(L12)X complex.

Functionally, forms part of the ribosomal stalk which helps the ribosome interact with GTP-bound translation factors. In Methanospirillum hungatei JF-1 (strain ATCC 27890 / DSM 864 / NBRC 100397 / JF-1), this protein is Large ribosomal subunit protein uL11.